The primary structure comprises 137 residues: Peptide methionine sulfoxide reductase MsrB (137 aa).

A MsrB domain is found at 7-129 (PEELKNGLSE…NSASLSFTDE (123 aa)). Zn(2+) contacts are provided by C46, C49, C95, and C98. The active-site Nucleophile is the C118.

Belongs to the MsrB Met sulfoxide reductase family. Zn(2+) is required as a cofactor.

It catalyses the reaction L-methionyl-[protein] + [thioredoxin]-disulfide + H2O = L-methionyl-(R)-S-oxide-[protein] + [thioredoxin]-dithiol. The chain is Peptide methionine sulfoxide reductase MsrB from Klebsiella pneumoniae subsp. pneumoniae (strain ATCC 700721 / MGH 78578).